We begin with the raw amino-acid sequence, 340 residues long: MAPEERADAARLLRGFERRFLAARALRSFPWQSLEEKLRDSSGSELLLDILQKTVKHPLCVKHPPSVKYSRSFLSELIRKHEAVHTEPLDELYQALAEVLTAEDPTHCHRSYLLPSGDSVTLCESTAIVSHGTTGLVTWNAALYLAEWAVENPAVFAHRMVLELGSGAGLTGLAICKTCRPRAYIFSDCHSHVLEQLRGNVLLNGFSLEPSIDTWAQHPGPHTPEAERPWVTVARLDWDTVTAPQLAAFQPDVVLAADVLYCPETVLSLVGVLRKLSTCRKDQRAPDAYIAFTVRNPETCQLFTTELGQAGIPWEEVPCHDQKLFPYEEHSEMAILKLTL.

The residue at position 1 (methionine 1) is an N-acetylmethionine. S-adenosyl-L-methionine-binding positions include tryptophan 139, 165-167, tryptophan 238, and alanine 257; that span reads GSG.

The protein belongs to the class I-like SAM-binding methyltransferase superfamily. EEF2KMT family. Interacts with FAM86B2 and FAM86C1P.

It is found in the cytoplasm. It catalyses the reaction L-lysyl-[protein] + 3 S-adenosyl-L-methionine = N(6),N(6),N(6)-trimethyl-L-lysyl-[protein] + 3 S-adenosyl-L-homocysteine + 3 H(+). Functionally, catalyzes the trimethylation of eukaryotic elongation factor 2 (EEF2) on 'Lys-525'. The sequence is that of Protein-lysine N-methyltransferase EEF2KMT (EEF2KMT) from Bos taurus (Bovine).